A 281-amino-acid polypeptide reads, in one-letter code: 2,3,4,5-tetrahydropyridine-2,6-dicarboxylate N-succinyltransferase (281 aa).

Substrate contacts are provided by Arg108 and Asp145.

The protein belongs to the transferase hexapeptide repeat family. In terms of assembly, homotrimer.

It localises to the cytoplasm. It catalyses the reaction (S)-2,3,4,5-tetrahydrodipicolinate + succinyl-CoA + H2O = (S)-2-succinylamino-6-oxoheptanedioate + CoA. Its pathway is amino-acid biosynthesis; L-lysine biosynthesis via DAP pathway; LL-2,6-diaminopimelate from (S)-tetrahydrodipicolinate (succinylase route): step 1/3. The polypeptide is 2,3,4,5-tetrahydropyridine-2,6-dicarboxylate N-succinyltransferase (Parvibaculum lavamentivorans (strain DS-1 / DSM 13023 / NCIMB 13966)).